A 596-amino-acid chain; its full sequence is Cysteine--tRNA ligase (596 aa).

Positions 1–199 are unknown; that stretch reads MKSKTFLEKN…SQRYFEELRK (199 aa). C212 is a binding site for Zn(2+). The 'HIGH' region signature appears at 214-224; the sequence is PTVYDEVHIGN. C377, H403, and E407 together coordinate Zn(2+). A 'KMSKS' region motif is present at residues 435-439; sequence KMSKS. ATP is bound at residue K438.

This sequence belongs to the class-I aminoacyl-tRNA synthetase family. In terms of assembly, monomer. Requires Zn(2+) as cofactor.

The protein resides in the cytoplasm. The catalysed reaction is tRNA(Cys) + L-cysteine + ATP = L-cysteinyl-tRNA(Cys) + AMP + diphosphate. This Mycoplasmopsis pulmonis (strain UAB CTIP) (Mycoplasma pulmonis) protein is Cysteine--tRNA ligase (cysS).